Consider the following 258-residue polypeptide: Phosphate import ATP-binding protein PstB 1 (258 aa).

Residues 5-247 (LDLTDVNIYY…EKIFSNPNQK (243 aa)) enclose the ABC transporter domain. 37-44 (GPSGCGKT) is an ATP binding site.

It belongs to the ABC transporter superfamily. Phosphate importer (TC 3.A.1.7) family. The complex is composed of two ATP-binding proteins (PstB), two transmembrane proteins (PstC and PstA) and a solute-binding protein (PstS).

The protein resides in the cell membrane. It catalyses the reaction phosphate(out) + ATP + H2O = ADP + 2 phosphate(in) + H(+). Part of the ABC transporter complex PstSACB involved in phosphate import. Responsible for energy coupling to the transport system. This Mycobacterium tuberculosis (strain CDC 1551 / Oshkosh) protein is Phosphate import ATP-binding protein PstB 1.